A 146-amino-acid polypeptide reads, in one-letter code: uncharacterized protein (146 aa).

This is an uncharacterized protein from Thermoproteus tenax virus 1 (strain KRA1) (TTV1).